The sequence spans 409 residues: Nucleoprotein (409 aa).

4 disordered regions span residues 1 to 32 (MASGKTTGKTDAPAPVIKLGGPKPPKVGSSGN), 44 to 63 (LNSPPPKFEGSGVPDNENLK), 120 to 145 (GADTKSRSNQGTRDPDKFDQYPLRFS), and 164 to 193 (RSGRSTAASSAASSRAPSRDGSRGRRSGAE). Residues 15 to 31 (PVIKLGGPKPPKVGSSG) show a composition bias toward low complexity. The segment at 29–160 (SSGNASWFQA…GNFRWDFIPI (132 aa)) is RNA-binding. The 126-residue stretch at 31 to 156 (GNASWFQALK…GGPDGNFRWD (126 aa)) folds into the CoV N NTD domain. A compositionally biased stretch (low complexity) spans 164 to 179 (RSGRSTAASSAASSRA). Positions 180-192 (PSRDGSRGRRSGA) are enriched in basic and acidic residues. Ser-190 carries the phosphoserine; by host modification. Positions 215–331 (TKAKADEMAH…QCVDGVGTRP (117 aa)) constitute a CoV N CTD domain. Residues 226 to 333 (RYCKRTIPPG…VDGVGTRPKD (108 aa)) form a dimerization region. Cys-320 and Cys-323 are joined by a disulfide. Residues 327–409 (VGTRPKDDEP…GESALGENEL (83 aa)) are disordered. Residues 341–355 (RPNSRPATRTSSPAP) show a composition bias toward polar residues. The segment covering 368 to 384 (KQDDEVDKALTSDEERN) has biased composition (basic and acidic residues). A Phosphothreonine; by host modification is found at Thr-378. Ser-379 carries the phosphoserine; by host modification.

The protein belongs to the gammacoronavirus nucleocapsid protein family. In terms of assembly, homooligomer. Both monomeric and oligomeric forms interact with RNA. Interacts with protein M. Interacts with NSP3; this interaction serves to tether the genome to the newly translated replicase-transcriptase complex at a very early stage of infection. Post-translationally, ADP-ribosylated. The ADP-ribosylation is retained in the virion during infection. In terms of processing, phosphorylated on serine and threonine residues.

The protein localises to the virion. It is found in the host endoplasmic reticulum-Golgi intermediate compartment. The protein resides in the host Golgi apparatus. Functionally, packages the positive strand viral genome RNA into a helical ribonucleocapsid (RNP) and plays a fundamental role during virion assembly through its interactions with the viral genome and membrane protein M. Plays an important role in enhancing the efficiency of subgenomic viral RNA transcription as well as viral replication. The protein is Nucleoprotein of Avian infectious bronchitis virus (strain D1466) (IBV).